The sequence spans 548 residues: Chaperonin GroEL 2 (548 aa).

Residues 29-32, 86-90, glycine 418, 482-484, and aspartate 498 contribute to the ATP site; these read TLGP, DGTTT, and NAA.

The protein belongs to the chaperonin (HSP60) family. In terms of assembly, forms a cylinder of 14 subunits composed of two heptameric rings stacked back-to-back. Interacts with the co-chaperonin GroES.

Its subcellular location is the cytoplasm. It carries out the reaction ATP + H2O + a folded polypeptide = ADP + phosphate + an unfolded polypeptide.. Functionally, together with its co-chaperonin GroES, plays an essential role in assisting protein folding. The GroEL-GroES system forms a nano-cage that allows encapsulation of the non-native substrate proteins and provides a physical environment optimized to promote and accelerate protein folding. The protein is Chaperonin GroEL 2 of Corynebacterium glutamicum (strain ATCC 13032 / DSM 20300 / JCM 1318 / BCRC 11384 / CCUG 27702 / LMG 3730 / NBRC 12168 / NCIMB 10025 / NRRL B-2784 / 534).